We begin with the raw amino-acid sequence, 169 residues long: FAM231A/C-like protein LOC102723383 (169 aa).

Positions 82 to 140 are disordered; sequence LIRSGSSQNESQEDQGAGLISQAGLKADNRRESSTWANEVEDRRPQCTPALNLTPSHPH.

This sequence belongs to the FAM231 family.

This Homo sapiens (Human) protein is FAM231A/C-like protein LOC102723383.